The sequence spans 101 residues: Apolipoprotein C-II (101 aa).

The first 22 residues, 1 to 22 (MGTRYFLVGFLILLVLGFEAQG), serve as a signal peptide directing secretion. Residues 66-74 (TVDEKIRDI) form a lipid binding region. The tract at residues 78–101 (STAAVTTYAGIITDQVFSILSGED) is lipoprotein lipase cofactor.

Belongs to the apolipoprotein C2 family. Proapolipoprotein C-II is synthesized as a sialic acid containing glycoprotein which is subsequently desialylated prior to its proteolytic processing. Post-translationally, proapolipoprotein C-II, the major form found in plasma undergoes proteolytic cleavage of its N-terminal hexapeptide to generate apolipoprotein C-II, which occurs as the minor form in plasma.

The protein resides in the secreted. Component of chylomicrons, very low-density lipoproteins (VLDL), low-density lipoproteins (LDL), and high-density lipoproteins (HDL) in plasma. Plays an important role in lipoprotein metabolism as an activator of lipoprotein lipase. Both proapolipoprotein C-II and apolipoprotein C-II can activate lipoprotein lipase. The polypeptide is Apolipoprotein C-II (APOC2) (Capra hircus aegagrus (Wild goat)).